A 181-amino-acid polypeptide reads, in one-letter code: Trafficking protein particle complex subunit 3-like protein (181 aa).

Cys-68 is lipidated: S-palmitoyl cysteine.

It belongs to the TRAPP small subunits family. BET3 subfamily. Homodimer. Component of the multisubunit TRAPP (transport protein particle) complex, which includes at least TRAPPC2, TRAPPC2L, TRAPPC3, TRAPPC3L, TRAPPC4, TRAPPC5, TRAPPC8, TRAPPC9, TRAPPC10, TRAPPC11 and TRAPPC12.

Its subcellular location is the golgi apparatus. It is found in the cis-Golgi network. It localises to the endoplasmic reticulum. May play a role in vesicular transport from endoplasmic reticulum to Golgi. In Homo sapiens (Human), this protein is Trafficking protein particle complex subunit 3-like protein (TRAPPC3L).